The chain runs to 29 residues: Glucagon (29 aa).

This sequence belongs to the glucagon family.

It is found in the secreted. Functionally, promotes hydrolysis of glycogen and lipids, and raises the blood sugar level. The sequence is that of Glucagon (gcg) from Thunnus obesus (Bigeye tuna).